The primary structure comprises 381 residues: Protein COS6 (381 aa).

Topologically, residues 1 to 42 (MKENELKNEKSVDVLSVKQLESQKTVLPQDLFRSSFTWFCYE) are cytoplasmic. The chain crosses the membrane as a helical span at residues 43–63 (IYKSLVFRIWMLLWLPLSVWW). The Extracellular portion of the chain corresponds to 64 to 69 (KLSNNW). A helical membrane pass occupies residues 70–90 (IYPLMVSLLVLFWGPVFVLVI). Topologically, residues 91–381 (FRLSRKRSLS…QLSCSEESLA (291 aa)) are cytoplasmic.

Belongs to the DUP/COS family.

The protein resides in the membrane. The protein is Protein COS6 (COS6) of Saccharomyces cerevisiae (strain ATCC 204508 / S288c) (Baker's yeast).